The sequence spans 417 residues: Serine hydroxymethyltransferase (417 aa).

Residues Leu121 and 125-127 (GHL) each bind (6S)-5,6,7,8-tetrahydrofolate. N6-(pyridoxal phosphate)lysine is present on Lys229. (6S)-5,6,7,8-tetrahydrofolate is bound at residue 355–357 (SPF).

The protein belongs to the SHMT family. As to quaternary structure, homodimer. Requires pyridoxal 5'-phosphate as cofactor.

The protein localises to the cytoplasm. It carries out the reaction (6R)-5,10-methylene-5,6,7,8-tetrahydrofolate + glycine + H2O = (6S)-5,6,7,8-tetrahydrofolate + L-serine. The protein operates within one-carbon metabolism; tetrahydrofolate interconversion. It participates in amino-acid biosynthesis; glycine biosynthesis; glycine from L-serine: step 1/1. Catalyzes the reversible interconversion of serine and glycine with tetrahydrofolate (THF) serving as the one-carbon carrier. This reaction serves as the major source of one-carbon groups required for the biosynthesis of purines, thymidylate, methionine, and other important biomolecules. Also exhibits THF-independent aldolase activity toward beta-hydroxyamino acids, producing glycine and aldehydes, via a retro-aldol mechanism. The polypeptide is Serine hydroxymethyltransferase (Edwardsiella ictaluri (strain 93-146)).